A 95-amino-acid chain; its full sequence is Aspartyl/glutamyl-tRNA(Asn/Gln) amidotransferase subunit C (95 aa).

It belongs to the GatC family. In terms of assembly, heterotrimer of A, B and C subunits.

It catalyses the reaction L-glutamyl-tRNA(Gln) + L-glutamine + ATP + H2O = L-glutaminyl-tRNA(Gln) + L-glutamate + ADP + phosphate + H(+). The catalysed reaction is L-aspartyl-tRNA(Asn) + L-glutamine + ATP + H2O = L-asparaginyl-tRNA(Asn) + L-glutamate + ADP + phosphate + 2 H(+). Its function is as follows. Allows the formation of correctly charged Asn-tRNA(Asn) or Gln-tRNA(Gln) through the transamidation of misacylated Asp-tRNA(Asn) or Glu-tRNA(Gln) in organisms which lack either or both of asparaginyl-tRNA or glutaminyl-tRNA synthetases. The reaction takes place in the presence of glutamine and ATP through an activated phospho-Asp-tRNA(Asn) or phospho-Glu-tRNA(Gln). This is Aspartyl/glutamyl-tRNA(Asn/Gln) amidotransferase subunit C from Dehalococcoides mccartyi (strain CBDB1).